A 488-amino-acid polypeptide reads, in one-letter code: Acetyl-CoA decarbonylase/synthase complex subunit gamma (488 aa).

The 61-residue stretch at 1 to 61 folds into the 4Fe-4S domain; the sequence is MPKKISAMDI…FEKNKKKIIE (61 aa). Positions 19, 22, 27, and 44 each coordinate [4Fe-4S] cluster.

In terms of assembly, heterodimer of delta and gamma chains. The ACDS complex is made up of alpha, epsilon, beta, gamma and delta chains with a probable stoichiometry of (alpha(2)epsilon(2))(4)-beta(8)-(gamma(1)delta(1))(8). Corrinoid serves as cofactor. The cofactor is [4Fe-4S] cluster.

It catalyses the reaction 5,6,7,8-tetrahydrosarcinapterin + methyl-Co(III)-[corrinoid Fe-S protein] = 5-methyltetrahydrosarcinapterin + Co(I)-[corrinoid Fe-S protein] + H(+). Part of a complex that catalyzes the reversible cleavage of acetyl-CoA, allowing autotrophic growth from CO(2). This Methanocaldococcus jannaschii (strain ATCC 43067 / DSM 2661 / JAL-1 / JCM 10045 / NBRC 100440) (Methanococcus jannaschii) protein is Acetyl-CoA decarbonylase/synthase complex subunit gamma.